Consider the following 264-residue polypeptide: 4-hydroxy-tetrahydrodipicolinate reductase (264 aa).

Residue 10-15 participates in NAD(+) binding; the sequence is GCLGRQ. Residue arginine 37 coordinates NADP(+). NAD(+) is bound by residues 99 to 101 and 121 to 124; these read GTT and SANL. Residue histidine 153 is the Proton donor/acceptor of the active site. Residue histidine 154 participates in (S)-2,3,4,5-tetrahydrodipicolinate binding. The Proton donor role is filled by lysine 157. A (S)-2,3,4,5-tetrahydrodipicolinate-binding site is contributed by 163-164; the sequence is GT.

This sequence belongs to the DapB family.

It is found in the cytoplasm. It catalyses the reaction (S)-2,3,4,5-tetrahydrodipicolinate + NAD(+) + H2O = (2S,4S)-4-hydroxy-2,3,4,5-tetrahydrodipicolinate + NADH + H(+). The catalysed reaction is (S)-2,3,4,5-tetrahydrodipicolinate + NADP(+) + H2O = (2S,4S)-4-hydroxy-2,3,4,5-tetrahydrodipicolinate + NADPH + H(+). It participates in amino-acid biosynthesis; L-lysine biosynthesis via DAP pathway; (S)-tetrahydrodipicolinate from L-aspartate: step 4/4. Its function is as follows. Catalyzes the conversion of 4-hydroxy-tetrahydrodipicolinate (HTPA) to tetrahydrodipicolinate. This Ehrlichia ruminantium (strain Gardel) protein is 4-hydroxy-tetrahydrodipicolinate reductase.